Here is a 92-residue protein sequence, read N- to C-terminus: Large ribosomal subunit protein bL25 (92 aa).

Belongs to the bacterial ribosomal protein bL25 family. In terms of assembly, part of the 50S ribosomal subunit; part of the 5S rRNA/L5/L18/L25 subcomplex. Contacts the 5S rRNA. Binds to the 5S rRNA independently of L5 and L18.

In terms of biological role, this is one of the proteins that binds to the 5S RNA in the ribosome where it forms part of the central protuberance. The protein is Large ribosomal subunit protein bL25 of Vibrio campbellii (strain ATCC BAA-1116).